Here is a 630-residue protein sequence, read N- to C-terminus: Chaperone protein HtpG (630 aa).

Residues 1 to 336 (MTTTVEQTAE…TADLPLNVSR (336 aa)) are a; substrate-binding. Residues 337–551 (EMIQESPILA…EDGYDRQMEK (215 aa)) form a b region. The segment at 552-630 (ILQNAGRLQG…VFERSVRSEG (79 aa)) is c.

The protein belongs to the heat shock protein 90 family. Homodimer.

It localises to the cytoplasm. Functionally, molecular chaperone. Has ATPase activity. In Rhizobium etli (strain ATCC 51251 / DSM 11541 / JCM 21823 / NBRC 15573 / CFN 42), this protein is Chaperone protein HtpG.